The following is a 212-amino-acid chain: Phosphatidylserine decarboxylase proenzyme (212 aa).

The active-site Schiff-base intermediate with substrate; via pyruvic acid is Ser182. Ser182 bears the Pyruvic acid (Ser); by autocatalysis mark.

This sequence belongs to the phosphatidylserine decarboxylase family. PSD-A subfamily. Heterodimer of a large membrane-associated beta subunit and a small pyruvoyl-containing alpha subunit. Requires pyruvate as cofactor. Is synthesized initially as an inactive proenzyme. Formation of the active enzyme involves a self-maturation process in which the active site pyruvoyl group is generated from an internal serine residue via an autocatalytic post-translational modification. Two non-identical subunits are generated from the proenzyme in this reaction, and the pyruvate is formed at the N-terminus of the alpha chain, which is derived from the carboxyl end of the proenzyme. The post-translation cleavage follows an unusual pathway, termed non-hydrolytic serinolysis, in which the side chain hydroxyl group of the serine supplies its oxygen atom to form the C-terminus of the beta chain, while the remainder of the serine residue undergoes an oxidative deamination to produce ammonia and the pyruvoyl prosthetic group on the alpha chain.

Its subcellular location is the cell membrane. The enzyme catalyses a 1,2-diacyl-sn-glycero-3-phospho-L-serine + H(+) = a 1,2-diacyl-sn-glycero-3-phosphoethanolamine + CO2. It participates in phospholipid metabolism; phosphatidylethanolamine biosynthesis; phosphatidylethanolamine from CDP-diacylglycerol: step 2/2. Catalyzes the formation of phosphatidylethanolamine (PtdEtn) from phosphatidylserine (PtdSer). The protein is Phosphatidylserine decarboxylase proenzyme of Pelodictyon phaeoclathratiforme (strain DSM 5477 / BU-1).